A 512-amino-acid polypeptide reads, in one-letter code: ATP synthase subunit alpha (512 aa).

Position 169-176 (169-176 (GDRQTGKT)) interacts with ATP.

It belongs to the ATPase alpha/beta chains family. In terms of assembly, F-type ATPases have 2 components, CF(1) - the catalytic core - and CF(0) - the membrane proton channel. CF(1) has five subunits: alpha(3), beta(3), gamma(1), delta(1), epsilon(1). CF(0) has three main subunits: a(1), b(2) and c(9-12). The alpha and beta chains form an alternating ring which encloses part of the gamma chain. CF(1) is attached to CF(0) by a central stalk formed by the gamma and epsilon chains, while a peripheral stalk is formed by the delta and b chains.

It localises to the cell membrane. The catalysed reaction is ATP + H2O + 4 H(+)(in) = ADP + phosphate + 5 H(+)(out). In terms of biological role, produces ATP from ADP in the presence of a proton gradient across the membrane. The alpha chain is a regulatory subunit. This Buchnera aphidicola subsp. Acyrthosiphon pisum (strain Tuc7) protein is ATP synthase subunit alpha.